A 180-amino-acid chain; its full sequence is Ubiquitin-conjugating enzyme E2 20 (180 aa).

The disordered stretch occupies residues 1–33 (MAAVNGYQGNTPADPPASNGSKQPAAPTKTVDS). Residues 35-180 (SVLKRLQSEL…VEKLYKPPSA (146 aa)) enclose the UBC core domain. Cys119 serves as the catalytic Glycyl thioester intermediate.

This sequence belongs to the ubiquitin-conjugating enzyme family. As to expression, expressed in all tissues with cell division activities and in mature leaves.

It catalyses the reaction S-ubiquitinyl-[E1 ubiquitin-activating enzyme]-L-cysteine + [E2 ubiquitin-conjugating enzyme]-L-cysteine = [E1 ubiquitin-activating enzyme]-L-cysteine + S-ubiquitinyl-[E2 ubiquitin-conjugating enzyme]-L-cysteine.. The protein operates within protein modification; protein ubiquitination. Accepts the ubiquitin from the E1 complex and catalyzes its covalent attachment to other proteins. This Arabidopsis thaliana (Mouse-ear cress) protein is Ubiquitin-conjugating enzyme E2 20 (UBC20).